The sequence spans 357 residues: Phenylalanine--tRNA ligase alpha subunit (357 aa).

Mg(2+) is bound at residue E257.

Belongs to the class-II aminoacyl-tRNA synthetase family. Phe-tRNA synthetase alpha subunit type 1 subfamily. In terms of assembly, tetramer of two alpha and two beta subunits. It depends on Mg(2+) as a cofactor.

The protein resides in the cytoplasm. It catalyses the reaction tRNA(Phe) + L-phenylalanine + ATP = L-phenylalanyl-tRNA(Phe) + AMP + diphosphate + H(+). The chain is Phenylalanine--tRNA ligase alpha subunit from Ruegeria sp. (strain TM1040) (Silicibacter sp.).